The sequence spans 76 residues: MEADVIKLLAAGLAMGLGAIGPGIGVGILGFGALQAIGRNPEAKGSIFTNMILLVAFAESIAIFALVISIVLIFVA.

Transmembrane regions (helical) follow at residues 8–28 and 55–75; these read LLAA…GVGI and VAFA…LIFV.

The protein belongs to the ATPase C chain family. F-type ATPases have 2 components, F(1) - the catalytic core - and F(0) - the membrane proton channel. F(1) has five subunits: alpha(3), beta(3), gamma(1), delta(1), epsilon(1). F(0) has three main subunits: a(1), b(2) and c(10-14). The alpha and beta chains form an alternating ring which encloses part of the gamma chain. F(1) is attached to F(0) by a central stalk formed by the gamma and epsilon chains, while a peripheral stalk is formed by the delta and b chains.

The protein localises to the cell membrane. Its function is as follows. F(1)F(0) ATP synthase produces ATP from ADP in the presence of a proton or sodium gradient. F-type ATPases consist of two structural domains, F(1) containing the extramembraneous catalytic core and F(0) containing the membrane proton channel, linked together by a central stalk and a peripheral stalk. During catalysis, ATP synthesis in the catalytic domain of F(1) is coupled via a rotary mechanism of the central stalk subunits to proton translocation. In terms of biological role, key component of the F(0) channel; it plays a direct role in translocation across the membrane. A homomeric c-ring of between 10-14 subunits forms the central stalk rotor element with the F(1) delta and epsilon subunits. The polypeptide is ATP synthase subunit c (Dehalococcoides mccartyi (strain ATCC BAA-2266 / KCTC 15142 / 195) (Dehalococcoides ethenogenes (strain 195))).